The following is a 57-amino-acid chain: Large ribosomal subunit protein bL32c (57 aa).

Component of the chloroplast large ribosomal subunit (LSU). Mature 70S chloroplast ribosomes of higher plants consist of a small (30S) and a large (50S) subunit. The 30S small subunit contains 1 molecule of ribosomal RNA (16S rRNA) and 24 different proteins. The 50S large subunit contains 3 rRNA molecules (23S, 5S and 4.5S rRNA) and 33 different proteins.

The protein localises to the plastid. The protein resides in the chloroplast. Component of the chloroplast ribosome (chloro-ribosome), a dedicated translation machinery responsible for the synthesis of chloroplast genome-encoded proteins, including proteins of the transcription and translation machinery and components of the photosynthetic apparatus. This Spinacia oleracea (Spinach) protein is Large ribosomal subunit protein bL32c (rpl32).